The chain runs to 405 residues: Multifunctional CCA protein (405 aa).

Positions 8 and 11 each coordinate ATP. Glycine 8 and arginine 11 together coordinate CTP. Residues aspartate 21 and aspartate 23 each contribute to the Mg(2+) site. Positions 91, 137, and 140 each coordinate ATP. The CTP site is built by arginine 91, arginine 137, and arginine 140. Residues 228–329 (TGIHSMMVLE…NDFLDKCDVW (102 aa)) form the HD domain.

This sequence belongs to the tRNA nucleotidyltransferase/poly(A) polymerase family. Bacterial CCA-adding enzyme type 1 subfamily. In terms of assembly, monomer. Can also form homodimers and oligomers. The cofactor is Mg(2+). It depends on Ni(2+) as a cofactor.

The catalysed reaction is a tRNA precursor + 2 CTP + ATP = a tRNA with a 3' CCA end + 3 diphosphate. It carries out the reaction a tRNA with a 3' CCA end + 2 CTP + ATP = a tRNA with a 3' CCACCA end + 3 diphosphate. Catalyzes the addition and repair of the essential 3'-terminal CCA sequence in tRNAs without using a nucleic acid template. Adds these three nucleotides in the order of C, C, and A to the tRNA nucleotide-73, using CTP and ATP as substrates and producing inorganic pyrophosphate. tRNA 3'-terminal CCA addition is required both for tRNA processing and repair. Also involved in tRNA surveillance by mediating tandem CCA addition to generate a CCACCA at the 3' terminus of unstable tRNAs. While stable tRNAs receive only 3'-terminal CCA, unstable tRNAs are marked with CCACCA and rapidly degraded. In Pseudoalteromonas atlantica (strain T6c / ATCC BAA-1087), this protein is Multifunctional CCA protein.